The primary structure comprises 247 residues: Adenosylcobinamide-GDP ribazoletransferase (247 aa).

Transmembrane regions (helical) follow at residues 1-21 (MLRLYFVALQFLAIIPIPFSF), 37-57 (LVGLTLGLLLAGCDYLLALAL), 61-81 (VADLLLVAILALVTGALHLDG), 109-129 (AVGVVGLVLALLLKYQALFAV), and 176-196 (VAVAAFFTVVTGWLLLGLPGI).

Belongs to the CobS family. The cofactor is Mg(2+).

It localises to the cell inner membrane. It catalyses the reaction alpha-ribazole + adenosylcob(III)inamide-GDP = adenosylcob(III)alamin + GMP + H(+). The enzyme catalyses alpha-ribazole 5'-phosphate + adenosylcob(III)inamide-GDP = adenosylcob(III)alamin 5'-phosphate + GMP + H(+). It participates in cofactor biosynthesis; adenosylcobalamin biosynthesis; adenosylcobalamin from cob(II)yrinate a,c-diamide: step 7/7. Its function is as follows. Joins adenosylcobinamide-GDP and alpha-ribazole to generate adenosylcobalamin (Ado-cobalamin). Also synthesizes adenosylcobalamin 5'-phosphate from adenosylcobinamide-GDP and alpha-ribazole 5'-phosphate. This Geotalea daltonii (strain DSM 22248 / JCM 15807 / FRC-32) (Geobacter daltonii) protein is Adenosylcobinamide-GDP ribazoletransferase.